The chain runs to 141 residues: Ribosome maturation factor RimP (141 aa).

This sequence belongs to the RimP family.

It localises to the cytoplasm. Its function is as follows. Required for maturation of 30S ribosomal subunits. The protein is Ribosome maturation factor RimP of Laribacter hongkongensis (strain HLHK9).